Here is a 322-residue protein sequence, read N- to C-terminus: TATA box-binding protein-associated factor RNA polymerase I subunit D (322 aa).

Disordered regions lie at residues 1–70 (MAQS…SIEP) and 82–116 (FKKKKRKKRKKRKYEPKLRPRGRPRGKPSGTRITR). Phosphoserine is present on Ser-23. Over residues 82 to 107 (FKKKKRKKRKKRKYEPKLRPRGRPRG) the composition is skewed to basic residues. Ser-137 bears the Phosphoserine mark. The tract at residues 198 to 219 (YMDDDGSLSPIEEPLTEDEATN) is disordered. Residue Ser-232 is modified to Phosphoserine. The span at 257–267 (FSKKAKDATHR) shows a compositional bias: basic and acidic residues. The tract at residues 257 to 276 (FSKKAKDATHREKGHRRTLK) is disordered.

As to quaternary structure, component of the transcription factor SL1/TIF-IB complex, composed of TBP and at least TAF1A, TAF1B, TAF1C and TAF1D. Interacts with UBTF.

The protein localises to the nucleus. Functionally, component of the transcription factor SL1/TIF-IB complex, which is involved in the assembly of the PIC (preinitiation complex) during RNA polymerase I-dependent transcription. The rate of PIC formation probably is primarily dependent on the rate of association of SL1/TIF-IB with the rDNA promoter. SL1/TIF-IB is involved in stabilization of nucleolar transcription factor 1/UBTF on rDNA. Formation of SL1/TIF-IB excludes the association of TBP with TFIID subunits. The protein is TATA box-binding protein-associated factor RNA polymerase I subunit D (Taf1d) of Mus musculus (Mouse).